A 475-amino-acid chain; its full sequence is Phosphoethanolamine N-methyltransferase 1 (475 aa).

Belongs to the class I-like SAM-binding methyltransferase superfamily.

It carries out the reaction phosphoethanolamine + S-adenosyl-L-methionine = N-methylethanolamine phosphate + S-adenosyl-L-homocysteine + H(+). Its pathway is phospholipid metabolism; phosphatidylcholine biosynthesis; phosphocholine from phosphoethanolamine. Feedback inhibition by phosphatidylcholine. Its function is as follows. Catalyzes the first step in the synthesis of phosphocholine by converting phosphoethanolamine into phospho-monomethylethanolamine (N-methylethanolamine phosphate). Phosphocholine is a precursor for phosphatidylcholine, a major component in membranes and a precursor itself in the production of glycoconjugates secreted by parasitic nematodes to avoid host immune responses. In Caenorhabditis elegans, this protein is Phosphoethanolamine N-methyltransferase 1.